We begin with the raw amino-acid sequence, 155 residues long: 6,7-dimethyl-8-ribityllumazine synthase (155 aa).

Residues phenylalanine 23, 57 to 59, and 81 to 83 contribute to the 5-amino-6-(D-ribitylamino)uracil site; these read AFE and AVI. Residue 86 to 87 participates in (2S)-2-hydroxy-3-oxobutyl phosphate binding; that stretch reads ST. Histidine 89 serves as the catalytic Proton donor. Phenylalanine 114 contributes to the 5-amino-6-(D-ribitylamino)uracil binding site. A (2S)-2-hydroxy-3-oxobutyl phosphate-binding site is contributed by arginine 128.

It belongs to the DMRL synthase family.

It catalyses the reaction (2S)-2-hydroxy-3-oxobutyl phosphate + 5-amino-6-(D-ribitylamino)uracil = 6,7-dimethyl-8-(1-D-ribityl)lumazine + phosphate + 2 H2O + H(+). It functions in the pathway cofactor biosynthesis; riboflavin biosynthesis; riboflavin from 2-hydroxy-3-oxobutyl phosphate and 5-amino-6-(D-ribitylamino)uracil: step 1/2. Its function is as follows. Catalyzes the formation of 6,7-dimethyl-8-ribityllumazine by condensation of 5-amino-6-(D-ribitylamino)uracil with 3,4-dihydroxy-2-butanone 4-phosphate. This is the penultimate step in the biosynthesis of riboflavin. The sequence is that of 6,7-dimethyl-8-ribityllumazine synthase from Geobacter sp. (strain M21).